The following is an 81-amino-acid chain: Small ribosomal subunit protein bS18A (81 aa).

This sequence belongs to the bacterial ribosomal protein bS18 family. As to quaternary structure, part of the 30S ribosomal subunit. Forms a tight heterodimer with protein bS6.

Its function is as follows. Binds as a heterodimer with protein bS6 to the central domain of the 16S rRNA, where it helps stabilize the platform of the 30S subunit. In Saccharopolyspora erythraea (strain ATCC 11635 / DSM 40517 / JCM 4748 / NBRC 13426 / NCIMB 8594 / NRRL 2338), this protein is Small ribosomal subunit protein bS18A.